The primary structure comprises 493 residues: Ketol-acid reductoisomerase (NADP(+)) (493 aa).

The KARI N-terminal Rossmann domain occupies 17 to 208; the sequence is LGKCRFMKRE…GGDRAGVLES (192 aa). Residues 45-48, Arg68, Arg76, Ser78, and 108-110 each bind NADP(+); these read CGAQ and DKQ. His132 is a catalytic residue. Position 158 (Gly158) interacts with NADP(+). KARI C-terminal knotted domains are found at residues 209–353 and 354–486; these read SFIA…SEQE and YYDK…MTDM. Positions 217, 221, 389, and 393 each coordinate Mg(2+). Ser414 serves as a coordination point for substrate.

This sequence belongs to the ketol-acid reductoisomerase family. It depends on Mg(2+) as a cofactor.

The enzyme catalyses (2R)-2,3-dihydroxy-3-methylbutanoate + NADP(+) = (2S)-2-acetolactate + NADPH + H(+). It carries out the reaction (2R,3R)-2,3-dihydroxy-3-methylpentanoate + NADP(+) = (S)-2-ethyl-2-hydroxy-3-oxobutanoate + NADPH + H(+). The protein operates within amino-acid biosynthesis; L-isoleucine biosynthesis; L-isoleucine from 2-oxobutanoate: step 2/4. Its pathway is amino-acid biosynthesis; L-valine biosynthesis; L-valine from pyruvate: step 2/4. Functionally, involved in the biosynthesis of branched-chain amino acids (BCAA). Catalyzes an alkyl-migration followed by a ketol-acid reduction of (S)-2-acetolactate (S2AL) to yield (R)-2,3-dihydroxy-isovalerate. In the isomerase reaction, S2AL is rearranged via a Mg-dependent methyl migration to produce 3-hydroxy-3-methyl-2-ketobutyrate (HMKB). In the reductase reaction, this 2-ketoacid undergoes a metal-dependent reduction by NADPH to yield (R)-2,3-dihydroxy-isovalerate. The protein is Ketol-acid reductoisomerase (NADP(+)) of Colwellia psychrerythraea (strain 34H / ATCC BAA-681) (Vibrio psychroerythus).